We begin with the raw amino-acid sequence, 416 residues long: NADH-quinone oxidoreductase subunit H (416 aa).

9 helical membrane passes run 16–36, 84–104, 124–144, 165–185, 197–217, 260–280, 288–308, 320–340, and 353–373; these read LILA…LAAI, PVYL…FAVI, LAVA…GIVL, VVSY…YAGT, STWY…SMVG, VSAL…PISL, WWPL…YIWL, FMAI…MIVA, and WASG…VILW.

The protein belongs to the complex I subunit 1 family. NDH-1 is composed of 14 different subunits. Subunits NuoA, H, J, K, L, M, N constitute the membrane sector of the complex.

It is found in the cell membrane. It catalyses the reaction a quinone + NADH + 5 H(+)(in) = a quinol + NAD(+) + 4 H(+)(out). Its function is as follows. NDH-1 shuttles electrons from NADH, via FMN and iron-sulfur (Fe-S) centers, to quinones in the respiratory chain. The immediate electron acceptor for the enzyme in this species is believed to be menaquinone. Couples the redox reaction to proton translocation (for every two electrons transferred, four hydrogen ions are translocated across the cytoplasmic membrane), and thus conserves the redox energy in a proton gradient. This subunit may bind ubiquinone. The protein is NADH-quinone oxidoreductase subunit H of Mycobacterium sp. (strain KMS).